The following is a 567-amino-acid chain: MEIAVIVLLLLGGVMIYNHVYRKKMYSEIDRLEAWKISIMNRPVPDELSKVKQLNMTGETEQLFEKWRQKWDDLVAVKLPDVEEKLFDTEELLDKYRYAKAKAVLREIDQLLRQAEEEVQLIIDEVHELIGSEEQNRTEIEELRTMYREAKKTLLAYRYTFGVAAAKLDEKLEEIESKFKQFEELTASGNYLAAREIVLSSKGELNKVTEMMSDIPELLTECQTTIPAQLEELYDGYKEMKQEGYILDHLQIDREIVQKREKIEQCMQMIGDLQIEEAKQGITEIKEEIDTLYDLLEKEVISHHYIKTEMSRIEEMLNELNEEAKETSEETLFVQQSYRLSTKDLEKYRSIEKQIHQLMKRFEIIQARILEAKTAHSLLKEELEQLLAQIEMMKEEHEEFRKMLQTLRKDELVAREKLDEMKKKLSEAMRLVQKSRLPGLPKSYELQLSEAKDSLMKVAVRLEEKPLNMSAVHQALEESGNMVQRVYERTVEMIEQASLVEKVIQYGNRYRRRYPSVKEGLEEAEFLFRHYDYEQALEQAVAALEKVEPGALQRIQQIFRDERSKEE.

Over 1 to 2 (ME) the chain is Extracellular. A helical transmembrane segment spans residues 3-21 (IAVIVLLLLGGVMIYNHVY). Residues 22 to 567 (RKKMYSEIDR…IFRDERSKEE (546 aa)) lie on the Cytoplasmic side of the membrane. Coiled coils occupy residues 97 to 188 (RYAK…LTAS) and 254 to 465 (REIV…LEEK).

This sequence belongs to the EzrA family.

It is found in the cell membrane. Its function is as follows. Negative regulator of FtsZ ring formation; modulates the frequency and position of FtsZ ring formation. Inhibits FtsZ ring formation at polar sites. Interacts either with FtsZ or with one of its binding partners to promote depolymerization. The polypeptide is Septation ring formation regulator EzrA (Geobacillus sp. (strain WCH70)).